We begin with the raw amino-acid sequence, 236 residues long: Cytochrome b-c1 complex subunit Rieske-4, mitochondrial (236 aa).

The N-terminal 24 residues, 1–24, are a transit peptide targeting the mitochondrion; it reads MINFGSCWGLASVTSNSFSIISGF. Over 25 to 73 the chain is Mitochondrial matrix; it reads SSNSVSHAHDMGLVPDLPPTVAAIKNPTSKIVYDEHNHERYPPGDPSKR. The chain crosses the membrane as a helical span at residues 74–96; it reads AFAYFVLTGGRFVYASLVRLLIL. Topologically, residues 97 to 236 are mitochondrial intermembrane; that stretch reads KFVLSMSASK…FLEENKLLIG (140 aa). The 89-residue stretch at 146–234 folds into the Rieske domain; that stretch reads INLANSVDLG…YSFLEENKLL (89 aa). [2Fe-2S] cluster is bound by residues Cys-179, His-181, Cys-198, and His-201. A disulfide bridge links Cys-184 with Cys-200.

It belongs to the Rieske iron-sulfur protein family. In terms of assembly, component of the ubiquinol-cytochrome c oxidoreductase (cytochrome b-c1 complex, complex III, CIII), a multisubunit enzyme composed of 3 respiratory subunits cytochrome b, cytochrome c1 and Rieske protein, 2 core protein subunits, and several low-molecular weight protein subunits. The complex exists as an obligatory dimer and forms supercomplexes (SCs) in the inner mitochondrial membrane with cytochrome c oxidase (complex IV, CIV). Requires [2Fe-2S] cluster as cofactor.

The protein resides in the mitochondrion inner membrane. The enzyme catalyses a quinol + 2 Fe(III)-[cytochrome c](out) = a quinone + 2 Fe(II)-[cytochrome c](out) + 2 H(+)(out). Functionally, component of the ubiquinol-cytochrome c oxidoreductase, a multisubunit transmembrane complex that is part of the mitochondrial electron transport chain which drives oxidative phosphorylation. The respiratory chain contains 3 multisubunit complexes succinate dehydrogenase (complex II, CII), ubiquinol-cytochrome c oxidoreductase (cytochrome b-c1 complex, complex III, CIII) and cytochrome c oxidase (complex IV, CIV), that cooperate to transfer electrons derived from NADH and succinate to molecular oxygen, creating an electrochemical gradient over the inner membrane that drives transmembrane transport and the ATP synthase. The cytochrome b-c1 complex catalyzes electron transfer from ubiquinol to cytochrome c, linking this redox reaction to translocation of protons across the mitochondrial inner membrane, with protons being carried across the membrane as hydrogens on the quinol. In the process called Q cycle, 2 protons are consumed from the matrix, 4 protons are released into the intermembrane space and 2 electrons are passed to cytochrome c. The Rieske protein is a catalytic core subunit containing a [2Fe-2S] iron-sulfur cluster. It cycles between 2 conformational states during catalysis to transfer electrons from the quinol bound in the Q(0) site in cytochrome b to cytochrome c1. In Nicotiana tabacum (Common tobacco), this protein is Cytochrome b-c1 complex subunit Rieske-4, mitochondrial.